Consider the following 784-residue polypeptide: Toll-like receptor 2 (784 aa).

A signal peptide spans 1–20 (MPHTLWMVWVLGVIISLSKE). The Extracellular portion of the chain corresponds to 21–588 (ESSNQASLSC…RLSVSECHRT (568 aa)). The cysteines at positions 30 and 36 are disulfide-linked. LRR repeat units follow at residues 54–77 (VKSL…RCVN), 78–101 (LQAL…SLGS), 102–125 (LEHL…PLSS), 126–150 (LTFL…HLTK), 151–175 (LQIL…GLTF), 176–199 (LEEL…SIQN), 200–223 (VSHL…VTSS), 224–250 (VECL…TNSL), 251–278 (IKKF…QISG), 279–308 (LLEL…DPGK), 309–337 (VETL…LTER), 338–361 (VKRI…HLKS), 362–388 (LEYL…AWPS), 389–414 (LQTL…TLKN), 415–437 (LTNI…WPEK), 438–457 (MKYL…CIPK), 458–478 (TLEI…NLPQ), 479–500 (LKEL…LLPM), and 501–524 (LLVL…SFHT). N-linked (GlcNAc...) asparagine glycosylation occurs at Asn114. Asn199 carries N-linked (GlcNAc...) asparagine glycosylation. The cysteines at positions 353 and 382 are disulfide-linked. Asn414 is a glycosylation site (N-linked (GlcNAc...) asparagine). Cys432 and Cys454 form a disulfide bridge. Asn442 carries N-linked (GlcNAc...) asparagine glycosylation. Positions 525–579 (LKTLEAGGNNFICSCEFLSFTQEQQALAKVLIDWPANYLCDSPSHVRGQQVQDVR) constitute an LRRCT domain. The helical transmembrane segment at 589–609 (ALVSGMCCALFLLILLTGVLC) threads the bilayer. Over 610 to 784 (HRFHGLWYMK…WVNLRAAIKS (175 aa)) the chain is Cytoplasmic. The TIR domain maps to 639-782 (ICYDAFVSYS…GFWVNLRAAI (144 aa)). Lys754 participates in a covalent cross-link: Glycyl lysine isopeptide (Lys-Gly) (interchain with G-Cter in ubiquitin). The ATG16L1-binding motif motif lies at 761–778 (YLEWPMDEAQREGFWVNL).

It belongs to the Toll-like receptor family. Interacts with LY96, TLR1 and TLR6 (via extracellular domain). TLR2 seems to exist in heterodimers with either TLR1 or TLR6 before stimulation by the ligand. The heterodimers form bigger oligomers in response to their corresponding ligands as well as further heterotypic associations with other receptors such as CD14 and/or CD36. Binds MYD88 (via TIR domain). Interacts with TICAM1. Interacts with CNPY3. Interacts with ATG16L1. Interacts with PPP1R11. Interacts with TICAM2. Interacts with TIRAP. In terms of assembly, (Microbial infection) Interacts with M.tuberculosis EsxA. As to quaternary structure, (Microbial infection) Interacts with M.bovis MPB83. (Microbial infection) Interacts with Staphylococcus aureus protein SSL5. Post-translationally, glycosylation of Asn-442 is critical for secretion of the N-terminal ectodomain of TLR2. Ubiquitinated at Lys-754 by PPP1R11, leading to its degradation. Deubiquitinated by USP2. In terms of tissue distribution, highly expressed in peripheral blood leukocytes, in particular in monocytes, in bone marrow, lymph node and in spleen. Also detected in lung and in fetal liver. Levels are low in other tissues.

It is found in the membrane. The protein resides in the cytoplasmic vesicle. The protein localises to the phagosome membrane. It localises to the membrane raft. Functionally, cooperates with LY96 to mediate the innate immune response to bacterial lipoproteins and other microbial cell wall components. Cooperates with TLR1 or TLR6 to mediate the innate immune response to bacterial lipoproteins or lipopeptides. Acts via MYD88 and TRAF6, leading to NF-kappa-B activation, cytokine secretion and the inflammatory response. May also activate immune cells and promote apoptosis in response to the lipid moiety of lipoproteins. Recognizes mycoplasmal macrophage-activating lipopeptide-2kD (MALP-2), soluble tuberculosis factor (STF), phenol-soluble modulin (PSM) and B.burgdorferi outer surface protein A lipoprotein (OspA-L) cooperatively with TLR6. Stimulation of monocytes in vitro with M.tuberculosis PstS1 induces p38 MAPK and ERK1/2 activation primarily via this receptor, but also partially via TLR4. MAPK activation in response to bacterial peptidoglycan also occurs via this receptor. Acts as a receptor for M.tuberculosis lipoproteins LprA, LprG, LpqH and PstS1, some lipoproteins are dependent on other coreceptors (TLR1, CD14 and/or CD36); the lipoproteins act as agonists to modulate antigen presenting cell functions in response to the pathogen. M.tuberculosis HSP70 (dnaK) but not HSP65 (groEL-2) acts via this protein to stimulate NF-kappa-B expression. Recognizes M.tuberculosis major T-antigen EsxA (ESAT-6) which inhibits downstream MYD88-dependent signaling (shown in mouse). Forms activation clusters composed of several receptors depending on the ligand, these clusters trigger signaling from the cell surface and subsequently are targeted to the Golgi in a lipid-raft dependent pathway. Forms the cluster TLR2:TLR6:CD14:CD36 in response to diacylated lipopeptides and TLR2:TLR1:CD14 in response to triacylated lipopeptides. Required for normal uptake of M.tuberculosis, a process that is inhibited by M.tuberculosis LppM. The chain is Toll-like receptor 2 from Homo sapiens (Human).